Here is a 440-residue protein sequence, read N- to C-terminus: Stromal membrane-associated protein 1 (440 aa).

The region spanning glutamine 18 to lysine 143 is the Arf-GAP domain. Residues cysteine 33 to cysteine 56 form a C4-type zinc finger. Composition is skewed to basic and acidic residues over residues glutamate 140 to alanine 158 and lysine 165 to lysine 178. 2 disordered regions span residues glutamate 140–alanine 211 and asparagine 410–lysine 440. The short motif at leucine 192–aspartate 196 is the Interaction with clathrin heavy chains element. The span at serine 420 to lysine 440 shows a compositional bias: low complexity.

As to quaternary structure, interacts with ARF6. Interacts with clathrin heavy chains via the clathrin box-like motif. As to expression, detected in adult brain, lung, heart, liver, ovary and bone marrow. Detected in stromal cells of the red pulp of adult spleen.

It localises to the cell membrane. GTPase activating protein that acts on ARF6. Plays a role in clathrin-dependent endocytosis. May play a role in erythropoiesis. The protein is Stromal membrane-associated protein 1 (Smap1) of Mus musculus (Mouse).